Reading from the N-terminus, the 161-residue chain is Endoribonuclease YbeY (161 aa).

Positions 121, 125, and 131 each coordinate Zn(2+).

The protein belongs to the endoribonuclease YbeY family. Zn(2+) is required as a cofactor.

It localises to the cytoplasm. Functionally, single strand-specific metallo-endoribonuclease involved in late-stage 70S ribosome quality control and in maturation of the 3' terminus of the 16S rRNA. In Xylella fastidiosa (strain M23), this protein is Endoribonuclease YbeY.